Here is a 390-residue protein sequence, read N- to C-terminus: Two-component response regulator ORR29 (390 aa).

The 118-residue stretch at 13 to 130 (SAMVIDEDKC…TIKNLWQYVD (118 aa)) folds into the Response regulatory domain. Asp-65 carries the 4-aspartylphosphate modification. A DNA-binding region (myb-like GARP) is located at residues 169-226 (KKYYLMWTPHLQKKFLHALQILGKDASPKNIKKIMGVDNIDCRQIAAHLQKHRLRLTK). Disordered stretches follow at residues 233 to 271 (FTTD…QPTE) and 303 to 339 (SKHS…SGDH). Residues 257-271 (NASTLQPRSNTQPTE) are compositionally biased toward polar residues.

This sequence belongs to the ARR family. Type-B subfamily. Two-component system major event consists of a His-to-Asp phosphorelay between a sensor histidine kinase (HK) and a response regulator (RR). In plants, the His-to-Asp phosphorelay involves an additional intermediate named Histidine-containing phosphotransfer protein (HPt). This multistep phosphorelay consists of a His-Asp-His-Asp sequential transfer of a phosphate group between first a His and an Asp of the HK protein, followed by the transfer to a conserved His of the HPt protein and finally the transfer to an Asp in the receiver domain of the RR protein.

The protein localises to the nucleus. Functionally, transcriptional activator that binds specific DNA sequence. Functions as a response regulator involved in His-to-Asp phosphorelay signal transduction system. Phosphorylation of the Asp residue in the receiver domain activates the ability of the protein to promote the transcription of target genes. May directly activate some type-A response regulators in response to cytokinins. The sequence is that of Two-component response regulator ORR29 from Oryza sativa subsp. indica (Rice).